The sequence spans 388 residues: N-acetylneuraminate epimerase (388 aa).

The first 26 residues, 1–26 (MFSLIGAKRQAIGIAALAWSTGAVMA), serve as a signal peptide directing secretion. Kelch repeat units lie at residues 48 to 92 (MAYV…AAAG), 94 to 147 (KIFA…VGLA), 149 to 186 (GRIA…KLVD), 187 to 232 (SYMG…ATMG), 236 to 285 (FLLV…VAGA), 307 to 356 (ANAA…DAPG), and 358 to 387 (LLVV…LSVE).

The protein belongs to the NanM family. In terms of assembly, homodimer.

It localises to the periplasm. It catalyses the reaction N-acetyl-alpha-neuraminate = N-acetyl-beta-neuraminate. Its function is as follows. Converts alpha-N-acetylneuranimic acid (Neu5Ac) to the beta-anomer, accelerating the equilibrium between the alpha- and beta-anomers. Probably facilitates sialidase-negative bacteria to compete successfully for limited amounts of extracellular Neu5Ac, which is likely taken up in the beta-anomer. In addition, the rapid removal of sialic acid from solution might be advantageous to the bacterium to damp down host responses. This chain is N-acetylneuraminate epimerase, found in Brucella suis (strain ATCC 23445 / NCTC 10510).